The chain runs to 465 residues: E3 ubiquitin-protein ligase ORTHRUS-LIKE 1 (465 aa).

The disordered stretch occupies residues 31–69; that stretch reads TSLSSPLDRSGDVDPLPVSDESGGSKADESMTDADETKK. Residues 109 to 148 form an RING-type zinc finger; the sequence is CSLCNQLPDRPVTILCGHNFCLKCFDKWIDQGNQICATCR. The YDG domain maps to 233–374; the sequence is VRNQGVLVGE…FKVCRYLFVR (142 aa). Residues 442–462 form a helical membrane-spanning segment; sequence MAMTCLLLFVLIILVGSSSIL.

The protein resides in the nucleus. The protein localises to the membrane. The enzyme catalyses S-ubiquitinyl-[E2 ubiquitin-conjugating enzyme]-L-cysteine + [acceptor protein]-L-lysine = [E2 ubiquitin-conjugating enzyme]-L-cysteine + N(6)-ubiquitinyl-[acceptor protein]-L-lysine.. Its pathway is protein modification; protein ubiquitination. Functionally, E3 ubiquitin-protein ligase. May participate in methylation-dependent transcriptional regulation. Mediates ubiquitination with the E2 ubiquitin-conjugating enzyme UBC11. This is E3 ubiquitin-protein ligase ORTHRUS-LIKE 1 (ORTHL) from Arabidopsis thaliana (Mouse-ear cress).